A 481-amino-acid polypeptide reads, in one-letter code: F-box protein At1g49360 (481 aa).

In terms of domain architecture, F-box spans 105–156 (LKEDLFLPSDLVRLILSRLSFKDNIRSSTVCKAWGDIAASVRVKSRRCWLLY).

The sequence is that of F-box protein At1g49360 from Arabidopsis thaliana (Mouse-ear cress).